The primary structure comprises 453 residues: Serine/threonine-protein phosphatase 2A 55 kDa regulatory subunit B delta isoform (453 aa).

4 WD repeats span residues 32–71, 97–138, 181–219, and 230–270; these read AEAD…KSRP, EIEE…KRAE, AHTY…RSFN, and ELTE…LCDR. S285 bears the Phosphoserine mark. WD repeat units lie at residues 289–327, 344–385, and 420–452; these read EIIS…RPVE, ENDC…DVTL, and DFNK…QDKI. Y305 carries the phosphotyrosine modification. The residue at position 308 (T308) is a Phosphothreonine.

Belongs to the phosphatase 2A regulatory subunit B family. In terms of assembly, PP2A consists of a common heterodimeric core enzyme, composed of a 36 kDa catalytic subunit (subunit C) and a 65 kDa constant regulatory subunit (PR65 or subunit A), that associates with a variety of regulatory subunits. Proteins that associate with the core dimer include three families of regulatory subunits B (the R2/B/PR55/B55, R3/B''/PR72/PR130/PR59 and R5/B'/B56 families), the 48 kDa variable regulatory subunit, viral proteins, and cell signaling molecules. Interacts with ENSA (when phosphorylated at 'Ser-67') and ARPP19 (when phosphorylated at 'Ser-62'), leading to inhibit PP2A activity. Interacts with IER5.

It is found in the cytoplasm. In terms of biological role, substrate-recognition subunit of protein phosphatase 2A (PP2A) that plays a key role in cell cycle by controlling mitosis entry and exit. Involved in chromosome clustering during late mitosis by mediating dephosphorylation of MKI67. The activity of PP2A complexes containing PPP2R2D (PR55-delta) fluctuate during the cell cycle: the activity is high in interphase and low in mitosis. The polypeptide is Serine/threonine-protein phosphatase 2A 55 kDa regulatory subunit B delta isoform (PPP2R2D) (Homo sapiens (Human)).